Reading from the N-terminus, the 1224-residue chain is Potassium channel subfamily T member 1 (1224 aa).

The segment at 1–37 (MARAKLPRSPSEGKAGPGDTPAGAAAPEEPHGLSPLL) is disordered. Residues 1–79 (MARAKLPRSP…LFFIKNQRSS (79 aa)) are Cytoplasmic-facing. Over residues 13–27 (GKAGPGDTPAGAAAP) the composition is skewed to low complexity. The helical transmembrane segment at 80 to 112 (LRIRLFNFSLKLLTCLLYIVRVLLDNPDQGIGC) threads the bilayer. Over 113-139 (WGCTKYNYTFNGSSSEFHWAPILWVER) the chain is Extracellular. 2 N-linked (GlcNAc...) asparagine glycosylation sites follow: asparagine 119 and asparagine 123. The chain crosses the membrane as a helical span at residues 140–164 (KMALWVIQVIVATISFLETMLIIYL). The Cytoplasmic segment spans residues 165-178 (SYKGNIWEQIFHVS). The helical transmembrane segment at 179 to 194 (FVLEMINTLPFIITVF) threads the bilayer. The Extracellular segment spans residues 195–201 (WPPLRNL). The chain crosses the membrane as a helical span at residues 202 to 219 (FIPVFLNCWLAKHALENM). The Cytoplasmic segment spans residues 220-232 (INDFHRAILRTQS). Residues 233-260 (AMFNQVLILFCTLLCLVFTGTCGIQHLE) form a helical membrane-spanning segment. Residues 261-267 (RAGGNLN) are Extracellular-facing. The pore-forming intramembrane region spans 268–288 (LLTSFYFCIVTFSTVGFGDVT). Valine 282 and glycine 283 together coordinate K(+). Topologically, residues 289–290 (PK) are extracellular. The helical transmembrane segment at 291-324 (IWPSQLLVVILICVTLVVLPLQFEELVYLWMERQ) threads the bilayer. The Cytoplasmic portion of the chain corresponds to 325–1224 (KSGGNYSRHR…NPETRDETQL (900 aa)). An RCK N-terminal 1 domain is found at 338–474 (EKHVVLCVSS…FHVKFADHVV (137 aa)). The Na(+) site is built by leucine 499, histidine 502, serine 524, and asparagine 526. Residues 644–675 (QNTDCRPSQGGSGGDGTKLTLPTENGSGSRRP) are disordered. Residues 663-673 (TLPTENGSGSR) are compositionally biased toward polar residues. Residues cysteine 744 and cysteine 745 each coordinate Zn(2+). Arginine 747 and lysine 750 together coordinate K(+). Na(+) is bound by residues arginine 747 and lysine 750. Zn(2+) is bound by residues cysteine 752 and histidine 754. Positions 755, 757, 763, and 764 each coordinate K(+). Position 757 (tyrosine 757) interacts with Na(+). Phenylalanine 765 provides a ligand contact to Na(+). Residues 767 to 907 (NKLIIVSAET…QFRAKDSYSL (141 aa)) form the RCK N-terminal 2 domain. 5 residues coordinate K(+): serine 773, leucine 804, aspartate 806, glycine 828, and aspartate 851. Disordered stretches follow at residues 1038–1066 (REAKGPWGTRAASGSGSTHGRHGGSADPV) and 1198–1224 (SSSQSRKSSCSNKLSSCNPETRDETQL). 2 stretches are compositionally biased toward low complexity: residues 1045–1055 (GTRAASGSGST) and 1198–1215 (SSSQSRKSSCSNKLSSCN).

The protein belongs to the potassium channel family. Calcium-activated (TC 1.A.1.3) subfamily. KCa4.1/KCNT1 sub-subfamily. In terms of assembly, homotetramer; which constitutes the Na(+)-activated K(+) channel. Interacts with KCNT2; these heterodimer channels differ from the homomers in their unitary conductance, kinetic behavior, subcellular localization, and response to activation of protein kinase C. Interacts (via C-terminus) with FMR1; this interaction alters gating properties of KCNT1. Interacts with CRBN via its cytoplasmic C-terminus. Phosphorylated by protein kinase C. Phosphorylation of the C-terminal domain increases channel activity. Enriched in the brainstem and olfactory bulb and detected at significant levels in four different brain regions.

The protein resides in the cell membrane. It carries out the reaction K(+)(in) = K(+)(out). Activated by high intracellular Na(+). In addition to activation by Na(+), is cooperatively activated by intracellular Cl(-) levels. Inhibited by Zn(2+). Activated upon stimulation of G-protein coupled receptors, such as CHRM1 and GRIA1. In terms of biological role, sodium-activated K(+) channel. Acts as an important mediator of neuronal membrane excitability. Contributes to the delayed outward currents. Regulates neuronal bursting in sensory neurons. Contributes to synaptic development and plasticity. This is Potassium channel subfamily T member 1 (Kcnt1) from Mus musculus (Mouse).